A 528-amino-acid chain; its full sequence is Low affinity inorganic phosphate transporter 4 (528 aa).

The Cytoplasmic segment spans residues 1–18 (MALEVLEALDSARTQWYH). Residues 19–39 (VTAIVIAGMGFFTDAYDLFCI) traverse the membrane as a helical segment. Topologically, residues 40–68 (TTVSKLLGRLYYFDPSTGKPGKLPNNVNN) are extracellular. The helical transmembrane segment at 69 to 89 (LVTGVALVGTLSGQLFFGYLG) threads the bilayer. Residues 90–96 (DKLGRKK) lie on the Cytoplasmic side of the membrane. Residues 97–117 (VYGVTLILMVACAICSGLSFG) traverse the membrane as a helical segment. Over 118–122 (ASAKS) the chain is Extracellular. A helical transmembrane segment spans residues 123 to 143 (VMGTLCFFRFWLGFGIGGDYP). Over 144–158 (LSATIMSEYANKRTR) the chain is Cytoplasmic. The helical transmembrane segment at 159–179 (GAFIAAVFAMQGVGIIFAGLV) threads the bilayer. Over 180 to 208 (SMCLSAGFKASYHAPSFHDDPIMSTQPQG) the chain is Extracellular. Residues 209–229 (DLMWRLVLMIGAVPAAMTYYW) traverse the membrane as a helical segment. Topologically, residues 230 to 292 (RMKMPETGRY…NEFFTRHGRH (63 aa)) are cytoplasmic. The helical transmembrane segment at 293 to 313 (LIGTMTSWFLLDIAFYSQNLT) threads the bilayer. Over 314–341 (QKDIFPAMGLIDKDFEMNAIQEVFETSR) the chain is Extracellular. A helical membrane pass occupies residues 342–362 (AMFVIALFGTFPGYWFTVFFI). The Cytoplasmic segment spans residues 363-371 (EKLGRYKIQ). Residues 372–392 (LIGFFMMSVFMFIIGVKYDYL) traverse the membrane as a helical segment. Topologically, residues 393-401 (RNENSHMFA) are extracellular. Residues 402–422 (LLYGLTFFFANFGPNSTTFVL) traverse the membrane as a helical segment. The Cytoplasmic portion of the chain corresponds to 423 to 433 (PAELFPTRVRS). A helical membrane pass occupies residues 434-454 (TCHALSAAAGKAGAMVGAFGI). The Extracellular portion of the chain corresponds to 455–467 (QNYTQKGEQKQIK). A glycan (N-linked (GlcNAc...) asparagine) is linked at N456. A helical membrane pass occupies residues 468–488 (HAMMILAVTNLIGFFCSFLVT). At 489 to 528 (ETKGRSLEEISGEDGRESELTPTPPNNRVPTRQEPRSETM) the chain is on the cytoplasmic side. Basic and acidic residues-rich tracts occupy residues 496–507 (EEISGEDGRESE) and 519–528 (TRQEPRSETM). Residues 496–528 (EEISGEDGRESELTPTPPNNRVPTRQEPRSETM) are disordered.

Belongs to the major facilitator superfamily. Phosphate:H(+) symporter (TC 2.A.1.9) family. In terms of tissue distribution, expressed only in mycorrhizal roots, exclusively in cortical cells containing arbuscules, upon arbuscular mycorrhizal (AM) symbiosis with AM fungi (e.g. Gigaspora margarita and Funnelliformis mosseae). Also observed in root tips of non-mycorrhizal roots, in a phosphate (Pi) depended-manner, highest expression levels being observed in low Pi conditions.

It localises to the cell membrane. It catalyses the reaction phosphate(in) + H(+)(in) = phosphate(out) + H(+)(out). Low-affinity transporter for external inorganic phosphate (Pi) probably involved in the acquisition of phosphate released by arbuscular mycorrhizal (AM) fungi (e.g. Gigaspora margarita and Funnelliformis mosseae) during AM symbiosis; required for propper mycorrhizal arbuscule morphology. Acts as a Pi-sensing machinery at the root tip level, independently of AM fungi, involved in the regulation of early root branching and lateral roots formation. The polypeptide is Low affinity inorganic phosphate transporter 4 (Lotus japonicus (Lotus corniculatus var. japonicus)).